The primary structure comprises 262 residues: 14-3-3 protein homolog (262 aa).

Belongs to the 14-3-3 family.

The polypeptide is 14-3-3 protein homolog (Trichoderma harzianum (Hypocrea lixii)).